We begin with the raw amino-acid sequence, 478 residues long: PRAME family member 26 (478 aa).

An LRR 1; degenerate repeat occupies 99–126; sequence RWKLQVLDLQDVCENFWMVWSEAMARGC. The stretch at 181-205 is one LRR 2; degenerate repeat; it reads HLCCKKLKILGMPFRNIRSILKMVN. An LRR 3; degenerate repeat occupies 206–232; sequence LDCIQEVEVNCKWVLPILTQFTPYLGH. The LRR 4; degenerate repeat unit spans residues 233-268; sequence MRNLQKLVLSHMDVSRYVSPEQKKEIVTQFTTQFLK. LRR repeat units follow at residues 269 to 294, 295 to 326, 327 to 347, 351 to 378, and 379 to 403; these read LHCLQKLYMNSVSFLEGHLDQLLSCL, KTSLKVLTITNCVLLESDLKHLSQCPSISQLK, TLDLSGIRLTNYSLVPLQILL, AATLEYLDLDDCGIIDSQVNAILPALSR, and CFELNTFSFCGNPISMATLENLLSH.

This sequence belongs to the PRAME family.

The sequence is that of PRAME family member 26 from Homo sapiens (Human).